The primary structure comprises 268 residues: MARFLRLCTWLLVLGSCLLATVQAECSQDCAKCSYHLVSPGDINFLACTLECEGQMPSHKIWETCKDLLQVSKPEFPCDSINMFKDSNKQDESHLLAKKYGGFMKRYGGFMKKMDELYPVEPEEEANGGEILAKKYGGFMKKDADEGDTLANSSDLLKELLGTGDNRAREGRHQESTDNDDNMSKRYGGFMRGLKRSPQVEDEAKELQKRYGGFMRRVGRPEWWMDYQKRYGGFLKRFAESLPSDEEAESYSKEVPEIEKRYGGFMRF.

The signal sequence occupies residues 1–24; the sequence is MARFLRLCTWLLVLGSCLLATVQA. Cystine bridges form between cysteine 26-cysteine 48, cysteine 30-cysteine 52, and cysteine 33-cysteine 65. The disordered stretch occupies residues 162-185; the sequence is GTGDNRAREGRHQESTDNDDNMSK. Over residues 166 to 176 the composition is skewed to basic and acidic residues; the sequence is NRAREGRHQES. 2 consecutive propeptides follow at residues 197-208 and 218-228; these read SPQVEDEAKELQ and VGRPEWWMDYQ. Phosphoserine is present on serine 252.

The protein belongs to the opioid neuropeptide precursor family. Proenkephalin-A is cleaved by CTSL to generate Met-enkephalin. In terms of processing, processed and degraded by ACE. Post-translationally, probably cleaved by ACE. Processed by ACE to generate Met-enkephalin in the nucleus accumbens of the brain. In terms of processing, the N-terminal domain contains 6 conserved cysteines thought to be involved in disulfide bonding and/or processing.

It localises to the cytoplasmic vesicle. It is found in the secretory vesicle. Its subcellular location is the chromaffin granule lumen. The protein localises to the secreted. Functionally, neuropeptide that competes with and mimic the effects of opiate drugs. They play a role in a number of physiologic functions, including pain perception and responses to stress. Its function is as follows. Met-enkephalin-Arg-Phe neuropeptide acts as a strong ligand of Mu-type opioid receptor OPRM1. Met-enkephalin-Arg-Phe-binding to OPRM1 in the nucleus accumbens of the brain increases activation of OPRM1, leading to long-term synaptic depression of glutamate release. Increases glutamate release in the striatum and decreases GABA concentration in the striatum. In terms of biological role, increases glutamate release in the striatum. The protein is Proenkephalin-A (PENK) of Mesocricetus auratus (Golden hamster).